Here is a 33-residue protein sequence, read N- to C-terminus: Large ribosomal subunit protein eL28 (33 aa).

It belongs to the eukaryotic ribosomal protein eL28 family. As to quaternary structure, component of the large ribosomal subunit.

The protein localises to the cytoplasm. Its function is as follows. Component of the large ribosomal subunit. The ribosome is a large ribonucleoprotein complex responsible for the synthesis of proteins in the cell. The sequence is that of Large ribosomal subunit protein eL28 (rpl28) from Xenopus laevis (African clawed frog).